Reading from the N-terminus, the 195-residue chain is Peptidyl-tRNA hydrolase (195 aa).

TRNA is bound at residue tyrosine 17. The active-site Proton acceptor is histidine 22. Phenylalanine 68, asparagine 70, and asparagine 116 together coordinate tRNA.

Belongs to the PTH family. In terms of assembly, monomer.

It localises to the cytoplasm. It carries out the reaction an N-acyl-L-alpha-aminoacyl-tRNA + H2O = an N-acyl-L-amino acid + a tRNA + H(+). Its function is as follows. Hydrolyzes ribosome-free peptidyl-tRNAs (with 1 or more amino acids incorporated), which drop off the ribosome during protein synthesis, or as a result of ribosome stalling. In terms of biological role, catalyzes the release of premature peptidyl moieties from peptidyl-tRNA molecules trapped in stalled 50S ribosomal subunits, and thus maintains levels of free tRNAs and 50S ribosomes. This chain is Peptidyl-tRNA hydrolase, found in Erwinia tasmaniensis (strain DSM 17950 / CFBP 7177 / CIP 109463 / NCPPB 4357 / Et1/99).